Here is a 604-residue protein sequence, read N- to C-terminus: Prostaglandin G/H synthase 2 (604 aa).

Residues 1-17 form the signal peptide; it reads MLFRAVLLCAALGLSQA. Positions 18–55 constitute an EGF-like domain; that stretch reads ANPCCSNPCQNRGECMSTGFDQYKCDCTRTGFYGENCT. 4 cysteine pairs are disulfide-bonded: Cys-21-Cys-32, Cys-22-Cys-145, Cys-26-Cys-42, and Cys-44-Cys-54. Asn-53 carries an N-linked (GlcNAc...) asparagine glycan. Residue Arg-106 coordinates substrate. N-linked (GlcNAc...) asparagine glycosylation is present at Asn-130. Residue His-193 is the Proton acceptor of the active site. Tyr-341 provides a ligand contact to substrate. Tyr-371 acts as the For cyclooxygenase activity in catalysis. A heme b-binding site is contributed by His-374. Asn-396 carries N-linked (GlcNAc...) asparagine glycosylation. At Cys-526 the chain carries S-nitrosocysteine. Cys-555 and Cys-561 are disulfide-bonded. An O-acetylserine; by SPHK1 modification is found at Ser-565. A glycan (N-linked (GlcNAc...) asparagine) is linked at Asn-580.

Belongs to the prostaglandin G/H synthase family. As to quaternary structure, homodimer. The cofactor is heme b. In terms of processing, S-nitrosylation by NOS2 (iNOS) activates enzyme activity. S-nitrosylation may take place on different Cys residues in addition to Cys-526. Acetylated at Ser-565 by SPHK1. During neuroinflammation, acetylation by SPHK1 promotes neuronal secretion of specialized preresolving mediators (SPMs), especially 15-R-lipoxin A4, which results in an increase of phagocytic microglia. Following colon injury, expressed in the wound bed mesenchyme during the first phase of repair, probably by colonic mesenchymal stem cells (at protein level).

It is found in the microsome membrane. The protein resides in the endoplasmic reticulum membrane. It localises to the nucleus inner membrane. Its subcellular location is the nucleus outer membrane. It carries out the reaction (5Z,8Z,11Z,14Z)-eicosatetraenoate + AH2 + 2 O2 = prostaglandin H2 + A + H2O. The enzyme catalyses (5Z,8Z,11Z,14Z)-eicosatetraenoate + 2 O2 = prostaglandin G2. It catalyses the reaction prostaglandin G2 + AH2 = prostaglandin H2 + A + H2O. The catalysed reaction is (5Z,8Z,11Z,14Z,17Z)-eicosapentaenoate + 2 O2 = prostaglandin G3. It carries out the reaction prostaglandin G3 + AH2 = prostaglandin H3 + A + H2O. The enzyme catalyses (8Z,11Z,14Z)-eicosatrienoate + 2 O2 = prostaglandin G1. It catalyses the reaction prostaglandin G1 + AH2 = prostaglandin H1 + A + H2O. The catalysed reaction is 2-(5Z,8Z,11Z,14Z)-eicosatetraenoyl-sn-glycero-3-phosphoethanolamine + 2 O2 = 2-(prostaglandin G2)-sn-glycero-3-phosphoethanolamine. It carries out the reaction 2-(prostaglandin G2)-sn-glycero-3-phosphoethanolamine + AH2 = 2-(prostaglandin H2)-sn-glycero-3-phosphoethanolamine + A + H2O. The enzyme catalyses 2-(5Z,8Z,11Z,14Z)-eicosatetraenoyl-sn-glycero-3-phosphocholine + 2 O2 = 2-(prostaglandin G2)-sn-glycero-3-phosphocholine. It catalyses the reaction 2-(prostaglandin G2)-sn-glycero-3-phosphocholine + AH2 = 2-(prostaglandin H2)-sn-glycero-3-phosphocholine + A + H2O. The catalysed reaction is (15S)-hydroperoxy-(5Z,8Z,11Z,13E)-eicosatetraenoate + AH2 = (15S)-hydroxy-(5Z,8Z,11Z,13E)-eicosatetraenoate + A + H2O. It carries out the reaction 2-(5Z,8Z,11Z,14Z)-eicosatetraenoyl-sn-glycero-3-phosphocholine + AH2 + O2 = 2-[(15S)-hydroxy-(5Z,8Z,11Z,13E)-eicosatetraenoyl]-sn-glycero-3-phosphocholine + A + H2O. The enzyme catalyses 2-(5Z,8Z,11Z,14Z)-eicosatetraenoyl-sn-glycero-3-phosphocholine + AH2 + O2 = 2-[(15R)-hydroxy-(5Z,8Z,11Z,13E)-eicosatetraenoyl]-sn-glycero-3-phosphocholine + A + H2O. It catalyses the reaction 2-(5Z,8Z,11Z,14Z)-eicosatetraenoyl-sn-glycero-3-phosphocholine + AH2 + O2 = 2-[(11R)-hydroxy-(5Z,8Z,12E,14Z)-eicosatetraenoyl]-sn-glycero-3-phosphocholine + A + H2O. The catalysed reaction is (9Z,12Z)-octadecadienoate + AH2 + O2 = 9-hydroxy-(10E,12Z)-octadecadienoate + A + H2O. It carries out the reaction (9Z,12Z)-octadecadienoate + AH2 + O2 = 13-hydroxy-(9Z,11E)-octadecadienoate + A + H2O. The enzyme catalyses (5Z,8Z,11Z,14Z)-eicosatetraenoate + AH2 + O2 = (15R)-hydroxy-(5Z,8Z,11Z,13E)-eicosatetraenoate + A + H2O. It catalyses the reaction (5Z,8Z,11Z,14Z)-eicosatetraenoate + AH2 + O2 = (11R)-hydroxy-(5Z,8Z,12E,14Z)-eicosatetraenoate + A + H2O. The catalysed reaction is (5Z,8Z,11Z,14Z,17Z)-eicosapentaenoate + AH2 + O2 = (11R)-hydroxy-(5Z,8Z,12E,14Z,17Z)-eicosapentaenoate + A + H2O. It carries out the reaction (5Z,8Z,11Z,14Z,17Z)-eicosapentaenoate + AH2 + O2 = (18S)-hydroxy-(5Z,8Z,11Z,14Z,16E)-eicosapentaenoate + A + H2O. The enzyme catalyses (5Z,8Z,11Z,14Z,17Z)-eicosapentaenoate + AH2 + O2 = (18R)-hydroxy-(5Z,8Z,11Z,14Z,16E)-eicosapentaenoate + A + H2O. It catalyses the reaction (5Z,8Z,11Z,14Z,17Z)-eicosapentaenoate + AH2 + O2 = (15R)-hydroxy-(5Z,8Z,11Z,13E,17Z)-eicosapentaenoate + A + H2O. The catalysed reaction is (5Z,8Z,11Z,14Z,17Z)-eicosapentaenoate + AH2 + O2 = (15S)-hydroxy-(5Z,8Z,11Z,13E,17Z)-eicosapentaenoate + A + H2O. It carries out the reaction (7Z,10Z,13Z,16Z,19Z)-docosapentaenoate + AH2 + O2 = 13R-hydroxy-(7Z,10Z,14E,16Z,19Z)-docosapentaenoate + A + H2O. The enzyme catalyses (4Z,7Z,10Z,13Z,16Z,19Z)-docosahexaenoate + AH2 + O2 = 13-hydroxy-(4Z,7Z,10Z,14E,16Z,19Z)-docosahexaenoate + A + H2O. It catalyses the reaction (5S)-hydroxy-(6E,8Z,11Z,14Z)-eicosatetraenoate + AH2 + O2 = (5S,15R)-dihydroxy-(6E,8Z,11Z,13E)-eicosatetraenoate + A + H2O. The catalysed reaction is (4Z,7Z,10Z,13Z,16Z,19Z)-docosahexaenoate + AH2 + O2 = 17R-hydroxy-(4Z,7Z,10Z,13Z,15E,19Z)-docosahexaenoate + A + H2O. It carries out the reaction (5S)-hydroxy-(6E,8Z,11Z,14Z)-eicosatetraenoate + AH2 + O2 = (5S,15S)-dihydroxy-(6E,8Z,11Z,13E)-eicosatetraenoate + A + H2O. The enzyme catalyses (5S)-hydroxy-(6E,8Z,11Z,14Z)-eicosatetraenoate + AH2 + O2 = (5S,11R)-dihydroxy-(6E,8Z,12E,14Z)-eicosatetraenoate + A + H2O. It catalyses the reaction 2-(5Z,8Z,11Z,14Z-eicosatetraenoyl)-glycerol + 2 O2 = 2-glyceryl-prostaglandin G2. The catalysed reaction is 2-glyceryl-prostaglandin G2 + AH2 = 2-glyceryl-prostaglandin H2 + A + H2O. It carries out the reaction (5Z,8Z,11Z,14Z)-eicosatetraenoate + O2 = (15R)-hydroperoxy-(5Z,8Z,11Z,13E)-eicosatetraenoate. The enzyme catalyses (5Z,8Z,11Z,14Z)-eicosatetraenoate + O2 = 11R-hydroperoxy-(5Z,8Z,12E,14Z)-eicosatetraenoate. It catalyses the reaction (9Z,12Z)-octadecadienoate + AH2 + O2 = (9R)-hydroxy-(10E,12Z)-octadecadienoate + A + H2O. The catalysed reaction is (9Z,12Z)-octadecadienoate + AH2 + O2 = (9S)-hydroxy-(10E,12Z)-octadecadienoate + A + H2O. It carries out the reaction (9Z,12Z)-octadecadienoate + AH2 + O2 = (13S)-hydroxy-(9Z,11E)-octadecadienoate + A + H2O. The enzyme catalyses (9Z,12Z)-octadecadienoate + AH2 + O2 = (13R)-hydroxy-(9Z,11E)-octadecadienoate + A + H2O. It functions in the pathway lipid metabolism; prostaglandin biosynthesis. Its activity is regulated as follows. Inhibited by the nonsteroidal anti-inflammatory drugs aspirin, naproxen, diclofenac, meclofenamic acid, indomethacin and their analogs. In terms of biological role, dual cyclooxygenase and peroxidase in the biosynthesis pathway of prostanoids, a class of C20 oxylipins mainly derived from arachidonate, with a particular role in the inflammatory response. The cyclooxygenase activity oxygenates arachidonate (AA, C20:4(n-6)) to the hydroperoxy endoperoxide prostaglandin G2 (PGG2), and the peroxidase activity reduces PGG2 to the hydroxy endoperoxide PGH2, the precursor of all 2-series prostaglandins and thromboxanes. This complex transformation is initiated by abstraction of hydrogen at carbon 13 (with S-stereochemistry), followed by insertion of molecular O2 to form the endoperoxide bridge between carbon 9 and 11 that defines prostaglandins. The insertion of a second molecule of O2 (bis-oxygenase activity) yields a hydroperoxy group in PGG2 that is then reduced to PGH2 by two electrons. Similarly catalyzes successive cyclooxygenation and peroxidation of dihomo-gamma-linoleate (DGLA, C20:3(n-6)) and eicosapentaenoate (EPA, C20:5(n-3)) to corresponding PGH1 and PGH3, the precursors of 1- and 3-series prostaglandins. In an alternative pathway of prostanoid biosynthesis, converts 2-arachidonoyl lysophopholipids to prostanoid lysophopholipids, which are then hydrolyzed by intracellular phospholipases to release free prostanoids. Metabolizes 2-arachidonoyl glycerol yielding the glyceryl ester of PGH2, a process that can contribute to pain response. Generates lipid mediators from n-3 and n-6 polyunsaturated fatty acids (PUFAs) via a lipoxygenase-type mechanism. Oxygenates PUFAs to hydroperoxy compounds and then reduces them to corresponding alcohols. Plays a role in the generation of resolution phase interaction products (resolvins) during both sterile and infectious inflammation. Metabolizes docosahexaenoate (DHA, C22:6(n-3)) to 17R-HDHA, a precursor of the D-series resolvins (RvDs). As a component of the biosynthetic pathway of E-series resolvins (RvEs), converts eicosapentaenoate (EPA, C20:5(n-3)) primarily to 18S-HEPE that is further metabolized by ALOX5 and LTA4H to generate 18S-RvE1 and 18S-RvE2. In vascular endothelial cells, converts docosapentaenoate (DPA, C22:5(n-3)) to 13R-HDPA, a precursor for 13-series resolvins (RvTs) shown to activate macrophage phagocytosis during bacterial infection. In activated leukocytes, contributes to oxygenation of hydroxyeicosatetraenoates (HETE) to diHETES (5,15-diHETE and 5,11-diHETE). Can also use linoleate (LA, (9Z,12Z)-octadecadienoate, C18:2(n-6)) as substrate and produce hydroxyoctadecadienoates (HODEs) in a regio- and stereospecific manner, being (9R)-HODE ((9R)-hydroxy-(10E,12Z)-octadecadienoate) and (13S)-HODE ((13S)-hydroxy-(9Z,11E)-octadecadienoate) its major products. During neuroinflammation, plays a role in neuronal secretion of specialized preresolving mediators (SPMs) 15R-lipoxin A4 that regulates phagocytic microglia. The sequence is that of Prostaglandin G/H synthase 2 from Mus musculus (Mouse).